The following is a 582-amino-acid chain: Vesicular glutamate transporter 2 (582 aa).

The Cytoplasmic segment spans residues 1-71 (MESVKQRILT…CTCFGLPRRY (71 aa)). The helical transmembrane segment at 72–92 (IIAIMSGLGFCISFGIRCNLG) threads the bilayer. Topologically, residues 93–125 (VAIVDMVNNSTIHRGGKVIKEKAKFNWDPETVG) are vesicular. Residues Asn100 and Asn101 are each glycosylated (N-linked (GlcNAc...) asparagine). Residues 126–146 (MIHGSFFWGYIITQIPGGYIA) traverse the membrane as a helical segment. At 147 to 148 (SR) the chain is on the cytoplasmic side. The helical transmembrane segment at 149-169 (LAANRVFGAAILLTSTLNMLI) threads the bilayer. Residues 170 to 177 (PSAARVHY) lie on the Vesicular side of the membrane. The chain crosses the membrane as a helical span at residues 178–198 (GCVIFVRILQGLVEGVTYPAC). Residues 199-216 (HGIWSKWAPPLERSRLAT) are Cytoplasmic-facing. Residues 217 to 237 (TSFCGSYAGAVIAMPLAGILV) traverse the membrane as a helical segment. The Vesicular segment spans residues 238–244 (QYTGWSS). The helical transmembrane segment at 245 to 265 (VFYVYGSFGMIWYMFWLLVSY) threads the bilayer. Over 266–310 (ESPAKHPTITDEERRYIEESIGESANLLGAMEKFKTPWRKFFTSM) the chain is Cytoplasmic. Residues 311–331 (PVYAIIVANFCRSWTFYLLLI) traverse the membrane as a helical segment. Topologically, residues 332–349 (SQPAYFEEVFGFEISKVG) are vesicular. Residues 350-370 (MLSAVPHLVMTIIVPIGGQIA) traverse the membrane as a helical segment. At 371 to 386 (DFLRSKQILSTTTVRK) the chain is on the cytoplasmic side. A helical transmembrane segment spans residues 387–407 (IMNCGGFGMEATLLLVVGYSH). Topologically, residues 408–409 (TR) are vesicular. A helical transmembrane segment spans residues 410-430 (GVAISFLVLAVGFSGFAISGF). Topologically, residues 431–443 (NVNHLDIAPRYAS) are cytoplasmic. The helical transmembrane segment at 444-464 (ILMGISNGVGTLSGMVCPIIV) threads the bilayer. The Vesicular portion of the chain corresponds to 465–477 (GAMTKNKSREEWQ). The N-linked (GlcNAc...) asparagine glycan is linked to Asn470. The chain crosses the membrane as a helical span at residues 478–498 (YVFLIAALVHYGGVIFYAIFA). Residues 499 to 582 (SGEKQPWADP…YNYKDRDDYS (84 aa)) are Cytoplasmic-facing.

Belongs to the major facilitator superfamily. Sodium/anion cotransporter family. VGLUT subfamily.

The protein localises to the cytoplasmic vesicle. Its subcellular location is the secretory vesicle. It localises to the synaptic vesicle membrane. It is found in the synapse. The protein resides in the synaptosome. The protein localises to the cell membrane. It carries out the reaction L-glutamate(out) = L-glutamate(in). The enzyme catalyses 3 Na(+)(out) + phosphate(out) = 3 Na(+)(in) + phosphate(in). The catalysed reaction is phosphate(in) = phosphate(out). It catalyses the reaction K(+)(in) + H(+)(out) = K(+)(out) + H(+)(in). It carries out the reaction chloride(in) = chloride(out). Chloride channel activity is allosterically activated by lumenal H(+) and Cl(-) leading to synaptic vesicles acidification. The L-glutamate transport activity is allosterically activated by lumenal H(+) and Cl(-). The allosteric requirement for H(+) efficiently prevents non-vesicular efflux across the plasma membrane. The L-glutamate uniporter activity exhibits a biphasic dependence on chloride concentration. Multifunctional transporter that transports L-glutamate as well as multiple ions such as chloride, proton, potassium, sodium and phosphate. At the synaptic vesicle membrane, mainly functions as a uniporter which transports preferentially L-glutamate but also, phosphate from the cytoplasm into synaptic vesicles at presynaptic nerve terminals of excitatory neural cells. The L-glutamate or phosphate uniporter activity is electrogenic and is driven by the proton electrochemical gradient, mainly by the electrical gradient established by the vacuolar H(+)-ATPase across the synaptic vesicle membrane. In addition, functions as a chloride channel that allows a chloride permeation through the synaptic vesicle membrane therefore affects the proton electrochemical gradient and promotes synaptic vesicles acidification. Moreover, functions as a vesicular K(+)/H(+) antiport allowing to maintain the electrical gradient and to decrease chemical gradient and therefore sustain vesicular L-glutamate uptake. The vesicular H(+)/H(+) antiport activity is electroneutral. At the plasma membrane, following exocytosis, functions as a symporter of Na(+) and phosphate from the extracellular space to the cytoplasm allowing synaptic phosphate homeostasis regulation. The symporter activity is driven by an inside negative membrane potential and is electrogenic. Also involved in the regulation of retinal hyaloid vessel regression during postnatal development. May also play a role in the endocrine L-glutamatergic system of other tissues such as pineal gland and pancreas. The protein is Vesicular glutamate transporter 2 of Bos taurus (Bovine).